Consider the following 143-residue polypeptide: Phosphoribosyl-AMP cyclohydrolase (143 aa).

D86 is a Mg(2+) binding site. Position 87 (C87) interacts with Zn(2+). The Mg(2+) site is built by D88 and D90. Zn(2+) contacts are provided by C103 and C110.

It belongs to the PRA-CH family. Homodimer. Requires Mg(2+) as cofactor. Zn(2+) serves as cofactor.

Its subcellular location is the cytoplasm. The enzyme catalyses 1-(5-phospho-beta-D-ribosyl)-5'-AMP + H2O = 1-(5-phospho-beta-D-ribosyl)-5-[(5-phospho-beta-D-ribosylamino)methylideneamino]imidazole-4-carboxamide. Its pathway is amino-acid biosynthesis; L-histidine biosynthesis; L-histidine from 5-phospho-alpha-D-ribose 1-diphosphate: step 3/9. Its function is as follows. Catalyzes the hydrolysis of the adenine ring of phosphoribosyl-AMP. The sequence is that of Phosphoribosyl-AMP cyclohydrolase from Rhodospirillum rubrum (strain ATCC 11170 / ATH 1.1.1 / DSM 467 / LMG 4362 / NCIMB 8255 / S1).